The following is a 172-amino-acid chain: Large ribosomal subunit protein uL10 (172 aa).

The protein belongs to the universal ribosomal protein uL10 family. In terms of assembly, part of the ribosomal stalk of the 50S ribosomal subunit. The N-terminus interacts with L11 and the large rRNA to form the base of the stalk. The C-terminus forms an elongated spine to which L12 dimers bind in a sequential fashion forming a multimeric L10(L12)X complex.

Functionally, forms part of the ribosomal stalk, playing a central role in the interaction of the ribosome with GTP-bound translation factors. In Rhodospirillum centenum (strain ATCC 51521 / SW), this protein is Large ribosomal subunit protein uL10.